We begin with the raw amino-acid sequence, 445 residues long: POU domain, class 3, transcription factor 2 (445 aa).

2 disordered regions span residues 64-173 (ALSH…WRSA) and 203-269 (LGAG…TPTS). Residues 67-90 (HGGGGGGGGGGGGGGGGGGGGGDG) are compositionally biased toward gly residues. 2 stretches are compositionally biased toward low complexity: residues 125–151 (QQQH…QQQQ) and 163–173 (HHPGPGAWRSA). A compositionally biased stretch (basic and acidic residues) spans 217 to 226 (LRDAHDEPHH). Residues 227-237 (ADHHPHPHSHP) show a composition bias toward basic residues. The segment covering 239–253 (QQPPPPPPPQGPPGH) has biased composition (pro residues). A POU-specific domain is found at 264-338 (EDTPTSDDLE…LLNKWLEEAD (75 aa)). Serine 343 is modified (phosphoserine). Residues 356-415 (KRKKRTSIEVSVKGALESHFLKCPKPSAQEITSLADSLQLEKEVVRVWFCNRRQKEKRMT) constitute a DNA-binding region (homeobox). Positions 411 to 445 (EKRMTPPGGTLPGAEDVYGGSRDTPPHHGVQTPVQ) are disordered.

Belongs to the POU transcription factor family. Class-3 subfamily. As to quaternary structure, interacts with PQBP1. Interaction with ISL1. In terms of tissue distribution, expressed specifically in the neuroectodermal cell lineage.

The protein localises to the nucleus. Transcription factor that plays a key role in neuronal differentiation. Binds preferentially to the recognition sequence which consists of two distinct half-sites, ('GCAT') and ('TAAT'), separated by a non-conserved spacer region of 0, 2, or 3 nucleotides. Acts as a transcriptional activator when binding cooperatively with SOX4, SOX11, or SOX12 to gene promoters. The combination of three transcription factors, ASCL1, POU3F2/BRN2 and MYT1L, is sufficient to reprogram fibroblasts and other somatic cells into induced neuronal (iN) cells in vitro. Acts downstream of ASCL1, accessing chromatin that has been opened by ASCL1, and promotes transcription of neuronal genes. This chain is POU domain, class 3, transcription factor 2 (Pou3f2), found in Mus musculus (Mouse).